We begin with the raw amino-acid sequence, 371 residues long: 4-hydroxy-3-methylbut-2-en-1-yl diphosphate synthase (flavodoxin) (371 aa).

Residues C270, C273, C305, and E312 each coordinate [4Fe-4S] cluster.

Belongs to the IspG family. Requires [4Fe-4S] cluster as cofactor.

The enzyme catalyses (2E)-4-hydroxy-3-methylbut-2-enyl diphosphate + oxidized [flavodoxin] + H2O + 2 H(+) = 2-C-methyl-D-erythritol 2,4-cyclic diphosphate + reduced [flavodoxin]. The protein operates within isoprenoid biosynthesis; isopentenyl diphosphate biosynthesis via DXP pathway; isopentenyl diphosphate from 1-deoxy-D-xylulose 5-phosphate: step 5/6. Its function is as follows. Converts 2C-methyl-D-erythritol 2,4-cyclodiphosphate (ME-2,4cPP) into 1-hydroxy-2-methyl-2-(E)-butenyl 4-diphosphate. This Shewanella halifaxensis (strain HAW-EB4) protein is 4-hydroxy-3-methylbut-2-en-1-yl diphosphate synthase (flavodoxin).